Here is a 314-residue protein sequence, read N- to C-terminus: N-alpha-acetyltransferase 80 (314 aa).

Residues 90–243 (LEPVHCRPEL…TTVLRAFSKP (154 aa)) enclose the N-acetyltransferase domain. Substrate is bound by residues Arg113 and 118-121 (RLHS). Residues 169-171 (VVV), 177-182 (GRGFGR), and Gln207 each bind acetyl-CoA. A disordered region spans residues 260-295 (VPRSSKGPPLPPPPPLPQSLTASPPPSPEPLPQSPL). The span at 267 to 292 (PPLPPPPPLPQSLTASPPPSPEPLPQ) shows a compositional bias: pro residues.

The protein belongs to the acetyltransferase family.

The protein resides in the cytoplasm. The protein localises to the cytosol. The catalysed reaction is N-terminal L-aspartyl-L-aspartyl-L-aspartyl-[protein] + acetyl-CoA = N-terminal N-acetyl-L-aspartyl-L-aspartyl-L-aspartyl-[protein] + CoA + H(+). The enzyme catalyses N-terminal L-glutamyl-L-glutamyl-L-glutamyl-[protein] + acetyl-CoA = N-terminal N-acetyl-L-glutamyl-L-glutamyl-L-glutamyl-[protein] + CoA + H(+). In terms of biological role, N-alpha-acetyltransferase that specifically mediates the acetylation of the acidic amino terminus of processed forms of beta- and gamma-actin (ACTB and ACTG, respectively). N-terminal acetylation of processed beta- and gamma-actin regulates actin filament depolymerization and elongation. In vivo, preferentially displays N-terminal acetyltransferase activity towards acid N-terminal sequences starting with Asp-Asp-Asp and Glu-Glu-Glu. In vitro, shows high activity towards Met-Asp-Glu-Leu and Met-Asp-Asp-Asp. May act as a tumor suppressor. In Mus musculus (Mouse), this protein is N-alpha-acetyltransferase 80.